A 398-amino-acid chain; its full sequence is Dual-specificity RNA methyltransferase RlmN (398 aa).

The Proton acceptor role is filled by E119. Positions 125 to 364 constitute a Radical SAM core domain; the sequence is EEERATLCVS…TIVRKTRGDD (240 aa). Residues C132 and C369 are joined by a disulfide bond. [4Fe-4S] cluster is bound by residues C139, C143, and C146. S-adenosyl-L-methionine-binding positions include 193–194, S225, 247–249, and N326; these read GE and SLH. The active-site S-methylcysteine intermediate is the C369.

The protein belongs to the radical SAM superfamily. RlmN family. Requires [4Fe-4S] cluster as cofactor.

The protein localises to the cytoplasm. It carries out the reaction adenosine(2503) in 23S rRNA + 2 reduced [2Fe-2S]-[ferredoxin] + 2 S-adenosyl-L-methionine = 2-methyladenosine(2503) in 23S rRNA + 5'-deoxyadenosine + L-methionine + 2 oxidized [2Fe-2S]-[ferredoxin] + S-adenosyl-L-homocysteine. The enzyme catalyses adenosine(37) in tRNA + 2 reduced [2Fe-2S]-[ferredoxin] + 2 S-adenosyl-L-methionine = 2-methyladenosine(37) in tRNA + 5'-deoxyadenosine + L-methionine + 2 oxidized [2Fe-2S]-[ferredoxin] + S-adenosyl-L-homocysteine. Its function is as follows. Specifically methylates position 2 of adenine 2503 in 23S rRNA and position 2 of adenine 37 in tRNAs. m2A2503 modification seems to play a crucial role in the proofreading step occurring at the peptidyl transferase center and thus would serve to optimize ribosomal fidelity. This chain is Dual-specificity RNA methyltransferase RlmN, found in Pectobacterium atrosepticum (strain SCRI 1043 / ATCC BAA-672) (Erwinia carotovora subsp. atroseptica).